A 734-amino-acid chain; its full sequence is Ribosomal RNA large subunit methyltransferase K/L (734 aa).

Residues Val43–Leu154 enclose the THUMP domain.

This sequence belongs to the methyltransferase superfamily. RlmKL family.

The protein resides in the cytoplasm. It catalyses the reaction guanosine(2445) in 23S rRNA + S-adenosyl-L-methionine = N(2)-methylguanosine(2445) in 23S rRNA + S-adenosyl-L-homocysteine + H(+). It carries out the reaction guanosine(2069) in 23S rRNA + S-adenosyl-L-methionine = N(2)-methylguanosine(2069) in 23S rRNA + S-adenosyl-L-homocysteine + H(+). Its function is as follows. Specifically methylates the guanine in position 2445 (m2G2445) and the guanine in position 2069 (m7G2069) of 23S rRNA. This is Ribosomal RNA large subunit methyltransferase K/L from Hydrogenovibrio crunogenus (strain DSM 25203 / XCL-2) (Thiomicrospira crunogena).